Reading from the N-terminus, the 317-residue chain is Insulin-like growth factor-binding protein 2 (317 aa).

The signal sequence occupies residues 1-33 (MQPRLGGPALLLLPPLLLLLLLGAGGGDCGARA). In terms of domain architecture, IGFBP N-terminal spans 35 to 126 (VLFRCPPCTP…VHGEGTCEKH (92 aa)). 6 disulfide bridges follow: Cys-39–Cys-76, Cys-42–Cys-78, Cys-50–Cys-79, Cys-68–Cys-82, Cys-90–Cys-103, and Cys-97–Cys-123. Disordered stretches follow at residues 125–151 (KHGD…GGQV) and 189–218 (EQHR…ARTP). The 83-residue stretch at 216-298 (RTPCQQELDQ…APTIRGDPEC (83 aa)) folds into the Thyroglobulin type-1 domain. Cystine bridges form between Cys-219/Cys-253, Cys-264/Cys-275, and Cys-277/Cys-298. The short motif at 293 to 295 (RGD) is the Cell attachment site element.

As to quaternary structure, interacts with IGF1. Interacts with IGF2. Interacts (via RGD motif) with integrin alpha5/ITGA5; this interaction induces cell migration, adhesion or apoptosis according to the context. Interacts with PTPRB; this interaction leads to PTPRB dimerization and inactivation. In terms of processing, cleaved by MMP9 leading to release of free IGF2 from IGFBP2-IGF2 complex, which contributes to enhance the motility and the growth of astrocytes. Post-translationally, O-glycosylated. As to expression, expressed in abundance in selected adult tissues, namely liver, kidney, adrenal, pituitary and choroid plexus.

Its subcellular location is the secreted. Its function is as follows. Multifunctional protein that plays a critical role in regulating the availability of IGFs such as IGF1 and IGF2 to their receptors and thereby regulates IGF-mediated cellular processes including proliferation, differentiation, and apoptosis in a cell-type specific manner. Functions coordinately with receptor protein tyrosine phosphatase beta/PTPRB and the IGF1 receptor to regulate IGF1-mediated signaling by stimulating the phosphorylation of PTEN leading to its inactivation and AKT1 activation. Plays a positive role in cell migration via interaction with integrin alpha5/ITGA5 through an RGD motif. Additionally, interaction with ITGA5/ITGB1 enhances the adhesion of endothelial progenitor cells to endothelial cells. Upon mitochondrial damage, facilitates apoptosis with ITGA5 of podocytes, and then activates the phosphorylation of focal adhesion kinase (FAK)-mediated mitochondrial injury. The polypeptide is Insulin-like growth factor-binding protein 2 (IGFBP2) (Ovis aries (Sheep)).